An 882-amino-acid polypeptide reads, in one-letter code: MKNWIKLKLTAIGWFIYGMPISVFYRYLWLRNKTLLFKTIAVHYIIPLIIELLPWYASKRKIGNYLRTSRVEITHTMSTNGPYSHSAVIKYVLLTIYYAILDNINSHLISIVSLENRLQIRRLVMEKLLYSEIGAFDFLRKKKNIGPAELEYKLSSSINTTISFFTYTIPDLIASIYAFVIEGSELLKKGHKIDPLIVLHPILIAIYQKVSQKLRERLVENNPDSSKFKDPYNSAMSKMISNTAEGLSDIQINNLQETQLGLFDNLIEKELSNTQSFSTLISRTWRSIHNRSLFEFAAEVWVAHKVMDRQKIDNQLYRTTLLDINRVIRLGNRLFQSLGSFKNIYKHQKKVKKLLNIPTFIEEDSHLKYIYKFEELKVSSDLKFSYENKFSSELPSFPVLDLQNEMVILPNKRYALIGQNRSGKSTLNHLLCKLYTPTEGQISMNGIPYSEISRSSIRRMISYVSQRPFIFPGTIMDNIRVGNPSATEEQVLEAADAAGVFAFADDNNFSLKQSFDSLSDTFDPDMEIPPTISPLSTSSNNINNTTTTTTNNNNNNNNNNNNNNNNNNNNNNNNNNNNNNNNNNNNNNNNNKNNNNNNNKPTTPTFVPSSPSQYSTINKSTIINNNTFIRRNSSMSQLNNSGGGNVNGNNNNNNNNNNNNNININNSGVGGRRNSVMDLQNKLLNQCDESESNKLVKRVWSVLNLTSISNSGGGDESDDDDEEAERNQRSLTPIIVPQLIDGGLSNHPILNQVVEAGGKNISGGFAQSIALARIFVRTEAKIVILDESMSQMDAFKKREIIFPKLFGFAEKHNITLIIVTHDLASVQNTVDHIFVLDHGKLCHQGSHEELMNENAQVYYKLLGLRKRFKNQSFNNLNTNTNK.

The next 3 membrane-spanning stretches (helical) occupy residues 4-24, 35-55, and 79-101; these read WIKL…ISVF, LLFK…LLPW, and TNGP…YAIL. An ABC transporter domain is found at 384 to 863; that stretch reads FSYENKFSSE…NAQVYYKLLG (480 aa). 418-425 provides a ligand contact to ATP; it reads GQNRSGKS. Disordered regions lie at residues 522–617, 634–669, and 710–730; these read FDPD…YSTI, SMSQ…NSGV, and NSGG…NQRS. Low complexity-rich tracts occupy residues 528-617 and 647-667; these read IPPT…YSTI and NGNN…INNS. Over residues 715–724 the composition is skewed to acidic residues; sequence DESDDDDEEA.

It belongs to the ABC transporter superfamily. ABCH family.

The protein localises to the membrane. The polypeptide is ABC transporter H family member 4 (abcH4) (Dictyostelium discoideum (Social amoeba)).